Reading from the N-terminus, the 296-residue chain is DNA primase small subunit PriS (296 aa).

Residues Asp-82, Asp-84, and Asp-191 contribute to the active site.

This sequence belongs to the eukaryotic-type primase small subunit family. Heterodimer of a small subunit (PriS) and a large subunit (PriL). Mg(2+) is required as a cofactor. It depends on Mn(2+) as a cofactor.

Catalytic subunit of DNA primase, an RNA polymerase that catalyzes the synthesis of short RNA molecules used as primers for DNA polymerase during DNA replication. The small subunit contains the primase catalytic core and has DNA synthesis activity on its own. Binding to the large subunit stabilizes and modulates the activity, increasing the rate of DNA synthesis while decreasing the length of the DNA fragments, and conferring RNA synthesis capability. The DNA polymerase activity may enable DNA primase to also catalyze primer extension after primer synthesis. May also play a role in DNA repair. The sequence is that of DNA primase small subunit PriS from Methanopyrus kandleri (strain AV19 / DSM 6324 / JCM 9639 / NBRC 100938).